Reading from the N-terminus, the 72-residue chain is Large ribosomal subunit protein bL31 (72 aa).

Belongs to the bacterial ribosomal protein bL31 family. Type A subfamily. As to quaternary structure, part of the 50S ribosomal subunit.

Binds the 23S rRNA. This is Large ribosomal subunit protein bL31 from Maricaulis maris (strain MCS10) (Caulobacter maris).